The following is a 176-amino-acid chain: Epididymal-specific lipocalin-9 (176 aa).

The signal sequence occupies residues 1–15 (MALLLLSLGLSLIAA). N-linked (GlcNAc...) asparagine glycans are attached at residues asparagine 68 and asparagine 129. Cysteines 83 and 161 form a disulfide.

The protein belongs to the calycin superfamily. Lipocalin family.

It is found in the secreted. This is Epididymal-specific lipocalin-9 from Homo sapiens (Human).